The sequence spans 469 residues: E3 ubiquitin-protein ligase pellino homolog 3 (469 aa).

The interval 1 to 39 (MVLEGNPEVGSPRTSDLQHRGNKGSCVLSSPGEDAQPGE) is disordered. Residue S11 is modified to Phosphoserine.

Belongs to the pellino family. Interacts with TRAF6, MAP3K14 and MAP3K7. Post-translationally, phosphorylated by IRAK1 enhancing its E3 ligase activity. In terms of tissue distribution, highly expressed in brain, heart and testis, and at lower level in kidney, liver, lung, placenta, small intestine, spleen and stomach. Isoform 1 is not expressed in lung.

It catalyses the reaction S-ubiquitinyl-[E2 ubiquitin-conjugating enzyme]-L-cysteine + [acceptor protein]-L-lysine = [E2 ubiquitin-conjugating enzyme]-L-cysteine + N(6)-ubiquitinyl-[acceptor protein]-L-lysine.. It participates in protein modification; protein ubiquitination. Functionally, E3 ubiquitin ligase catalyzing the covalent attachment of ubiquitin moieties onto substrate proteins. Involved in the TLR and IL-1 signaling pathways via interaction with the complex containing IRAK kinases and TRAF6. Mediates 'Lys-63'-linked polyubiquitination of IRAK1. Can activate AP1/JUN and ELK1. Acts as a regulator of innate immunity by mediating 'Lys-63'-linked polyubiquitination of RIPK2 downstream of NOD1 and NOD2, thereby transforming RIPK2 into a scaffolding protein for downstream effectors, ultimately leading to activation of the NF-kappa-B and MAP kinases signaling. Catalyzes 'Lys-63'-linked polyubiquitination of RIPK2 in parallel of XIAP. The sequence is that of E3 ubiquitin-protein ligase pellino homolog 3 from Homo sapiens (Human).